The following is a 198-amino-acid chain: Adenylate kinase (198 aa).

ATP is bound at residue G10–T15. Residues S30–V59 form an NMP region. AMP is bound by residues T31, R36, E57 to V59, G85 to R88, and Q92. The tract at residues K126–D142 is LID. R127 contributes to the ATP binding site. The AMP site is built by R139 and R150. A178 contacts ATP.

It belongs to the adenylate kinase family. In terms of assembly, monomer.

It is found in the cytoplasm. It catalyses the reaction AMP + ATP = 2 ADP. It functions in the pathway purine metabolism; AMP biosynthesis via salvage pathway; AMP from ADP: step 1/1. In terms of biological role, catalyzes the reversible transfer of the terminal phosphate group between ATP and AMP. Plays an important role in cellular energy homeostasis and in adenine nucleotide metabolism. The polypeptide is Adenylate kinase (Mesorhizobium japonicum (strain LMG 29417 / CECT 9101 / MAFF 303099) (Mesorhizobium loti (strain MAFF 303099))).